The chain runs to 436 residues: ATP-dependent RNA helicase RhlB (436 aa).

The Q motif motif lies at 9 to 37 (QKFADLDLLPQVIEGLEKKGFDYCTPIQA). Residues 40 to 219 (LPVLLTGQDI…FEHMHNPEHV (180 aa)) enclose the Helicase ATP-binding domain. 53-60 (AQTGTGKT) contacts ATP. Residues 165–168 (DEAD) carry the DEAD box motif. The region spanning 245-390 (ALLQTLIEEE…MSDYDASALL (146 aa)) is the Helicase C-terminal domain. The tract at residues 398–436 (RLRTRNPQQRRSNNNGPRNGNRKPNQNRRPRQPRHNKEA) is disordered. Positions 402–421 (RNPQQRRSNNNGPRNGNRKP) are enriched in low complexity. Residues 422 to 436 (NQNRRPRQPRHNKEA) are compositionally biased toward basic residues.

The protein belongs to the DEAD box helicase family. RhlB subfamily. Component of the RNA degradosome, which is a multiprotein complex involved in RNA processing and mRNA degradation.

The protein localises to the cytoplasm. The catalysed reaction is ATP + H2O = ADP + phosphate + H(+). DEAD-box RNA helicase involved in RNA degradation. Has RNA-dependent ATPase activity and unwinds double-stranded RNA. This chain is ATP-dependent RNA helicase RhlB, found in Vibrio atlanticus (strain LGP32) (Vibrio splendidus (strain Mel32)).